A 403-amino-acid chain; its full sequence is L-lactate oxidase (403 aa).

The FMN hydroxy acid dehydrogenase domain occupies 21–375 (EGSVDFVNVF…KHFKLRHNPY (355 aa)). Residue Tyr-47 coordinates pyruvate. Residues 99–101 (PVA), Ser-128, and Gln-150 each bind FMN. Position 152 (Tyr-152) interacts with pyruvate. Residue Thr-178 participates in FMN binding. The pyruvate site is built by Arg-187 and Tyr-220. FMN is bound at residue Lys-246. 2 residues coordinate pyruvate: His-270 and Arg-273. His-270 acts as the Proton acceptor in catalysis. FMN is bound by residues 301–305 (DSGVR) and Arg-325.

This sequence belongs to the FMN-dependent alpha-hydroxy acid dehydrogenase family. In terms of assembly, homotetramer. Requires FMN as cofactor.

It carries out the reaction (S)-lactate + O2 = pyruvate + H2O2. Catalyzes the oxidation of (S)-lactate (L-lactate) to pyruvate, with a reduction of O2 to H2O2. Is likely involved in the L-lactate aerobic metabolism of S.iniae that enables the bacterium to utilize L-lactate as an energy source for growth under aerobic conditions in the absence (or at low concentrations) of glucose. The sequence is that of L-lactate oxidase from Streptococcus iniae (Streptococcus shiloi).